Here is an 87-residue protein sequence, read N- to C-terminus: Small ribosomal subunit protein bS20 (87 aa).

Over residues 1–15 (MANTRSAKKMVRKIA) the composition is skewed to basic residues. Disordered stretches follow at residues 1–22 (MANTRSAKKMVRKIAARTDVNK) and 64–87 (KGVTHKNTASRKVSRLSARVKAMA).

Belongs to the bacterial ribosomal protein bS20 family.

Binds directly to 16S ribosomal RNA. This is Small ribosomal subunit protein bS20 from Hyphomonas neptunium (strain ATCC 15444).